The chain runs to 77 residues: uncharacterized protein (77 aa).

This is an uncharacterized protein from Saccharomyces cerevisiae (strain ATCC 204508 / S288c) (Baker's yeast).